Here is a 102-residue protein sequence, read N- to C-terminus: Small ubiquitin-related modifier 1 (102 aa).

One can recognise a Ubiquitin-like domain in the interval 21 to 98 (DYIKLKVIGQ…IEVYQEQTGG (78 aa)). A Glycyl lysine isopeptide (Gly-Lys) (interchain with K-? in acceptor proteins) cross-link involves residue glycine 98. A propeptide spanning residues 99–102 (HSTI) is cleaved from the precursor.

This sequence belongs to the ubiquitin family. SUMO subfamily. As to quaternary structure, interacts with sae2, ube2i, ranbp2, pias1 and pias2. Interacts with sox9 and sox10. Covalently attached to a number of proteins. In terms of processing, cleavage of precursor form by a sentrin-specific protease is necessary for function.

It localises to the nucleus membrane. The protein resides in the nucleus speckle. The protein localises to the cytoplasm. It is found in the nucleus. Its subcellular location is the PML body. It localises to the cell membrane. Ubiquitin-like protein that can be covalently attached to proteins as a monomer or a lysine-linked polymer. Covalent attachment via an isopeptide bond to its substrates requires prior activation by the E1 complex sae1-sae2 and linkage to the E2 enzyme ube2i. This post-translational modification on lysine residues of proteins plays a crucial role in a number of cellular processes such as nuclear transport, DNA replication and repair, mitosis and signal transduction. Polymeric sumo1 chains are also susceptible to polyubiquitination which functions as a signal for proteasomal degradation of modified proteins. The sequence is that of Small ubiquitin-related modifier 1 (sumo1) from Xenopus tropicalis (Western clawed frog).